The sequence spans 242 residues: Venom nerve growth factor 3 (242 aa).

The first 18 residues, 1–18 (MSMLCYTLIIAFLIGIWA), serve as a signal peptide directing secretion. Residues 19–125 (APQSEDNVPL…ALNRNIQAKR (107 aa)) constitute a propeptide that is removed on maturation. The segment at 45–69 (HEGLKTSRNTDQRHPAPKKVDDQEP) is disordered. A compositionally biased stretch (basic and acidic residues) spans 46–66 (EGLKTSRNTDQRHPAPKKVDD). 3 cysteine pairs are disulfide-bonded: Cys139-Cys203, Cys181-Cys231, and Cys191-Cys233.

This sequence belongs to the NGF-beta family. In terms of assembly, homodimer; non-covalently linked. In terms of tissue distribution, expressed by the venom gland.

It is found in the secreted. In terms of biological role, nerve growth factor is important for the development and maintenance of the sympathetic and sensory nervous systems. It stimulates division and differentiation of sympathetic and embryonic sensory neurons as well as basal forebrain cholinergic neurons in the brain. Its relevance in the snake venom is not clear. However, it has been shown to inhibit metalloproteinase-dependent proteolysis of platelet glycoprotein Ib alpha, suggesting a metalloproteinase inhibition to prevent metalloprotease autodigestion and/or protection against prey proteases. Binds a lipid between the two protein chains in the homodimer. The lipid-bound form promotes histamine relase from mouse mast cells, contrary to the lipid-free form. This chain is Venom nerve growth factor 3, found in Pseudechis australis (Mulga snake).